Consider the following 123-residue polypeptide: Small ribosomal subunit protein uS12 (123 aa).

Positions 1–32 (MPTIQQLVRKGRKTKVSKNKTPALKGSPQRRG) are disordered. Basic residues predominate over residues 9 to 18 (RKGRKTKVSK). A 3-methylthioaspartic acid modification is found at aspartate 89.

The protein belongs to the universal ribosomal protein uS12 family. Part of the 30S ribosomal subunit. Contacts proteins S8 and S17. May interact with IF1 in the 30S initiation complex.

In terms of biological role, with S4 and S5 plays an important role in translational accuracy. Its function is as follows. Interacts with and stabilizes bases of the 16S rRNA that are involved in tRNA selection in the A site and with the mRNA backbone. Located at the interface of the 30S and 50S subunits, it traverses the body of the 30S subunit contacting proteins on the other side and probably holding the rRNA structure together. The combined cluster of proteins S8, S12 and S17 appears to hold together the shoulder and platform of the 30S subunit. The chain is Small ribosomal subunit protein uS12 from Thermobifida fusca (strain YX).